Here is a 539-residue protein sequence, read N- to C-terminus: M protein, serotype 24 (539 aa).

The first 42 residues, 1 to 42, serve as a signal peptide directing secretion; sequence MTKNNTNRHYSLRKLKTGTASVAVALTVLGAGLVVNTNEVSA. One copy of the A-1 repeat lies at 118-152; it reads LEARKADLEKALEGAMNFSTADSAKIKTLEAEKAA. Positions 118–301 are 5.3 X 35 AA tandem repeats, A-type; the sequence is LEARKADLEK…ALEAEKADLE (184 aa). An A-2 repeat occupies 153-187; the sequence is LAARKADLEKALEGAMNFSTADSAKIKTLEAEKAA. Residues 188–222 form an A-3 repeat; it reads LEARQAELEKALEGAMNFSTADSAKIKTLEAEKAA. An A-4 repeat occupies 223–257; sequence LAARKADLEKALEGAMNFSTADSAKIKTLEAEKAA. One copy of the A-5 repeat lies at 258–292; sequence LEARQAELEKALEGAMNFSTADSAKIKTLEAEKAA. One copy of the A-6; truncated repeat lies at 293 to 297; that stretch reads LEAEK. Residues 297–401 are disordered; sequence KADLEHQSQV…REAKKQVEKA (105 aa). 3 C repeats span residues 298–332, 333–367, and 368–402; these read ADLEHQSQVLNANRQSLRRDLDASREAKKQLEAEH, QKLEEQNKISEASRQSLRRDLDASREAKKQLEAEH, and QKLEEQNKISEASRQSLRRDLDASREAKKQVEKAL. A compositionally biased stretch (polar residues) spans 303 to 312; it reads QSQVLNANRQ. Composition is skewed to basic and acidic residues over residues 314–340, 349–375, and 384–401; these read LRRDLDASREAKKQLEAEHQKLEEQNK and LRRDLDASREAKKQVEKA. D repeat units follow at residues 435–440, 441–446, 449–454, and 456–461; these read AKLEAE, AKALKE, AKQAEE, and AKLRAG. A disordered region spans residues 456–511; sequence AKLRAGKASDSQTPDAKPGNKAVPGKGQAPQAGTKPNQNKAPMKETKRQLPSTGET. Positions 505 to 509 match the LPXTG sorting signal motif; the sequence is LPSTG. Threonine 508 bears the Pentaglycyl murein peptidoglycan amidated threonine mark. Positions 509-539 are cleaved as a propeptide — removed by sortase; the sequence is GETANPFFTAAALTVMATAGVAAVVKRKEEN.

The protein belongs to the M protein family.

It localises to the secreted. Its subcellular location is the cell wall. Functionally, this protein is one of the different antigenic serotypes of protein M. Protein M is closely associated with virulence of the bacterium and can render the organism resistant to phagocytosis. This Streptococcus pyogenes protein is M protein, serotype 24 (emm24).